The primary structure comprises 304 residues: Oxygen-dependent coproporphyrinogen-III oxidase (304 aa).

Ser94 lines the substrate pocket. Residues His98 and His108 each contribute to the a divalent metal cation site. Catalysis depends on His108, which acts as the Proton donor. Position 110–112 (110–112 (NVR)) interacts with substrate. His147 and His177 together coordinate a divalent metal cation. An important for dimerization region spans residues 242–277 (YVEFNLVWDRGTLFGLQSGGRTESVLMSMPPLARWQ). 260-262 (GGR) contacts substrate.

It belongs to the aerobic coproporphyrinogen-III oxidase family. Homodimer. The cofactor is a divalent metal cation.

It is found in the cytoplasm. The enzyme catalyses coproporphyrinogen III + O2 + 2 H(+) = protoporphyrinogen IX + 2 CO2 + 2 H2O. It participates in porphyrin-containing compound metabolism; protoporphyrin-IX biosynthesis; protoporphyrinogen-IX from coproporphyrinogen-III (O2 route): step 1/1. Involved in the heme biosynthesis. Catalyzes the aerobic oxidative decarboxylation of propionate groups of rings A and B of coproporphyrinogen-III to yield the vinyl groups in protoporphyrinogen-IX. The polypeptide is Oxygen-dependent coproporphyrinogen-III oxidase (Sodalis glossinidius (strain morsitans)).